The primary structure comprises 759 residues: Rho GTPase-activating protein 26 (759 aa).

In terms of domain architecture, BAR spans 7–262; sequence EFSDCYLDSP…MKENPHEHLA (256 aa). Positions 265 to 369 constitute a PH domain; the sequence is PYTMEGYLYV…WMEAMDGREP (105 aa). One can recognise a Rho-GAP domain in the interval 383–568; that stretch reads AQLDNIGFSI…IIIENYEKMF (186 aa). Residues 578-701 are disordered; sequence NSQLHLSRKR…STSSDSSPVS (124 aa). Over residues 608 to 617 the composition is skewed to basic and acidic residues; the sequence is HNTEKEEKRN. Positions 618-637 are enriched in low complexity; that stretch reads SVNSSAESVSSSNANSSANS. A compositionally biased stretch (polar residues) spans 638–650; that stretch reads TCTQCSNMNNLNA. Low complexity predominate over residues 679 to 701; that stretch reads PMFSAPSSPMPTSSTSSDSSPVS. The region spanning 701 to 759 is the SH3 domain; that stretch reads SVPRKAKALYACKAEHDSELSFSAGTVFDNVYPSQEPGWLEGILNGKTGLIPENYVEFL.

Its subcellular location is the cell junction. It is found in the focal adhesion. The protein localises to the cytoplasm. It localises to the cytoskeleton. The protein resides in the endosome membrane. Its function is as follows. GTPase-activating protein for rhoa and cdc42. The sequence is that of Rho GTPase-activating protein 26 (arhgap26) from Xenopus tropicalis (Western clawed frog).